We begin with the raw amino-acid sequence, 914 residues long: Caprin-2 (914 aa).

Disordered regions lie at residues Pro259 to Leu283, Glu298 to Phe326, Lys367 to Asp411, Asp439 to Arg480, Cys495 to Tyr529, His608 to Asn631, and Gly718 to Leu747. Residues Asp264–Lys273 are compositionally biased toward basic and acidic residues. The segment covering Pro274–Leu283 has biased composition (polar residues). The segment covering Asp370–Ser392 has biased composition (basic and acidic residues). Residues Lys469–Arg480 show a composition bias toward polar residues. Basic and acidic residues predominate over residues Leu508–Ala520. A compositionally biased stretch (low complexity) spans Ser610–Thr626. Residues Gly718 to Ser738 are compositionally biased toward polar residues. Residues Leu780–Asp914 form the C1q domain. Residues Asp865 and Glu871 each coordinate Ca(2+).

Belongs to the caprin family. Homotrimer; via C1q domain.

The protein localises to the cytoplasm. It is found in the cell membrane. Functionally, promotes phosphorylation of the Wnt coreceptor LRP6, leading to increased activity of the canonical Wnt signaling pathway. Facilitates constitutive LRP6 phosphorylation by CDK14/CCNY during G2/M stage of the cell cycle, which may potentiate cells for Wnt signaling. May regulate the transport and translation of mRNAs, modulating for instance the expression of proteins involved in synaptic plasticity in neurons. Involved in regulation of growth as erythroblasts shift from a highly proliferative state towards their terminal phase of differentiation. May be involved in apoptosis. This chain is Caprin-2, found in Danio rerio (Zebrafish).